Consider the following 114-residue polypeptide: Transmembrane protein 14C (114 aa).

A run of 4 helical transmembrane segments spans residues 8–28 (LVPLHWLGFGYAALVASGGII), 33–53 (AGSVPSLAAGLLFGGLAGLGS), 62–82 (NIWLFLVTSGTLAGIMGMRFY), and 87–107 (FMPAGLIAGASLLMVVKLGIS).

Its subcellular location is the mitochondrion membrane. In terms of biological role, required for normal heme biosynthesis. This chain is Transmembrane protein 14C (TMEM14C), found in Bos taurus (Bovine).